We begin with the raw amino-acid sequence, 721 residues long: Glycine--tRNA ligase beta subunit (721 aa).

This sequence belongs to the class-II aminoacyl-tRNA synthetase family. As to quaternary structure, tetramer of two alpha and two beta subunits.

The protein localises to the cytoplasm. The enzyme catalyses tRNA(Gly) + glycine + ATP = glycyl-tRNA(Gly) + AMP + diphosphate. This Sinorhizobium medicae (strain WSM419) (Ensifer medicae) protein is Glycine--tRNA ligase beta subunit.